A 732-amino-acid polypeptide reads, in one-letter code: Zinc/cadmium/lead-transporting P-type ATPase (732 aa).

The Cytoplasmic segment spans residues 1–124; it reads MSTPDNHGKK…QAADEPQASR (124 aa). Residues 48–112 enclose the HMA domain; it reads TRYSWKVSGM…AVQKAGYSLR (65 aa). Zn(2+) is bound by residues Asp-58, Cys-59, and Cys-62. The chain crosses the membrane as a helical span at residues 125–145; that stretch reads LKENLPLITLIVMMAISWGLE. A topological domain (periplasmic) is located at residue Gln-146. A helical transmembrane segment spans residues 147–167; sequence FNHPFGQLAFIATTLVGLYPI. Residues 168 to 179 lie on the Cytoplasmic side of the membrane; that stretch reads ARQALRLIKSGS. The chain crosses the membrane as a helical span at residues 180–197; that stretch reads YFAIETLMSVAAIGALFI. Over 198–202 the chain is Periplasmic; the sequence is GATAE. Residues 203 to 222 traverse the membrane as a helical segment; it reads AAMVLLLFLIGERLEGWAAS. Topologically, residues 223 to 356 are cytoplasmic; it reads RARQGVSALM…IDRFSRIYTP (134 aa). The helical transmembrane segment at 357 to 377 threads the bilayer; it reads AIMAVALLVTLVPPLLFAASW. Residues 378-383 are Periplasmic-facing; sequence QEWIYK. A helical transmembrane segment spans residues 384–404; that stretch reads GLTLLLIGCPCALVISTPAAI. Cys-392 and Cys-394 together coordinate Zn(2+). At 405–685 the chain is on the cytoplasmic side; that stretch reads TSGLAAAARR…RATHANIRQN (281 aa). Asp-436 (4-aspartylphosphate intermediate) is an active-site residue. Residues Asp-436, Thr-438, and Asp-628 each contribute to the Mg(2+) site. Residues 686-702 traverse the membrane as a helical segment; that stretch reads ITIALGLKGIFLVTTLL. Residues 703 to 707 are Periplasmic-facing; sequence GMTGL. The helical transmembrane segment at 708 to 729 threads the bilayer; the sequence is WLAVLADTGATVLVTANALRLL. Asp-714 provides a ligand contact to Zn(2+). Residues 730-732 are Cytoplasmic-facing; sequence RRR.

Belongs to the cation transport ATPase (P-type) (TC 3.A.3) family. Type IB subfamily.

It is found in the cell inner membrane. It catalyses the reaction Pb(2+)(in) + ATP + H2O = Pb(2+)(out) + ADP + phosphate + H(+). The enzyme catalyses Zn(2+)(in) + ATP + H2O = Zn(2+)(out) + ADP + phosphate + H(+). The catalysed reaction is Cd(2+)(in) + ATP + H2O = Cd(2+)(out) + ADP + phosphate + H(+). Confers resistance to zinc, cadmium and lead. Couples the hydrolysis of ATP with the export of zinc, cadmium or lead. The sequence is that of Zinc/cadmium/lead-transporting P-type ATPase from Shigella sonnei (strain Ss046).